The chain runs to 139 residues: Myosin light chain kinase, smooth muscle (139 aa).

Residues 48-97 (APTGENAKAPEMKARRPKSSLPPVLGTESDATVKKKPAPKTPPKAAMPPQ) are disordered.

This sequence belongs to the protein kinase superfamily. CAMK Ser/Thr protein kinase family. As to quaternary structure, interacts with SVIL. Post-translationally, the C-terminus is deglutamylated by AGTPBP1/CCP1, AGBL1/CCP4 and AGBL4/CCP6, leading to the formation of Myosin light chain kinase, smooth muscle, deglutamylated form. The consequences of C-terminal deglutamylation are unknown.

The catalysed reaction is L-seryl-[myosin light chain] + ATP = O-phospho-L-seryl-[myosin light chain] + ADP + H(+). The enzyme catalyses L-threonyl-[myosin light chain] + ATP = O-phospho-L-threonyl-[myosin light chain] + ADP + H(+). Functionally, phosphorylates a specific serine in the N-terminus of a myosin light chain. Also regulates actin-myosin interaction through a non-kinase activity. The protein is Myosin light chain kinase, smooth muscle (MYLK) of Sus scrofa (Pig).